The following is a 141-amino-acid chain: Hemoglobin subunit alpha (141 aa).

The region spanning 1 to 141 is the Globin domain; the sequence is VLSPADKSNV…VSTVLTSKYR (141 aa). At Ser-3 the chain carries Phosphoserine. N6-succinyllysine occurs at positions 7 and 11. Lys-16 carries the N6-acetyllysine; alternate modification. At Lys-16 the chain carries N6-succinyllysine; alternate. Tyr-24 is subject to Phosphotyrosine. Ser-35 bears the Phosphoserine mark. Lys-40 carries the N6-succinyllysine modification. A Phosphoserine modification is found at Ser-49. Residue His-58 participates in O2 binding. His-87 lines the heme b pocket. A Phosphoserine modification is found at Ser-102. Phosphothreonine is present on Thr-108. Phosphoserine is present on residues Ser-124 and Ser-131. Residues Thr-134 and Thr-137 each carry the phosphothreonine modification. Position 138 is a phosphoserine (Ser-138).

It belongs to the globin family. In terms of assembly, heterotetramer of two alpha chains and two beta chains. As to expression, red blood cells.

Its function is as follows. Involved in oxygen transport from the lung to the various peripheral tissues. Hemopressin acts as an antagonist peptide of the cannabinoid receptor CNR1. Hemopressin-binding efficiently blocks cannabinoid receptor CNR1 and subsequent signaling. This is Hemoglobin subunit alpha (HBA) from Leontocebus fuscicollis (Brown-mantled tamarin).